The following is a 450-amino-acid chain: Tubulin alpha chain (450 aa).

The MREC motif motif lies at 1-4 (MREC). Gln-11 serves as a coordination point for GTP. Lys-40 bears the N6-acetyllysine mark. Glu-71, Ser-140, Gly-144, Thr-145, Thr-179, Asn-206, and Asn-228 together coordinate GTP. Mg(2+) is bound at residue Glu-71. Glu-254 is an active-site residue. Glu-444 carries the 5-glutamyl polyglutamate modification.

The protein belongs to the tubulin family. Dimer of alpha and beta chains. A typical microtubule is a hollow water-filled tube with an outer diameter of 25 nm and an inner diameter of 15 nM. Alpha-beta heterodimers associate head-to-tail to form protofilaments running lengthwise along the microtubule wall with the beta-tubulin subunit facing the microtubule plus end conferring a structural polarity. Microtubules usually have 13 protofilaments but different protofilament numbers can be found in some organisms and specialized cells. Mg(2+) is required as a cofactor. Post-translationally, some glutamate residues at the C-terminus are polyglycylated, resulting in polyglycine chains on the gamma-carboxyl group. Glycylation is mainly limited to tubulin incorporated into axonemes (cilia and flagella) whereas glutamylation is prevalent in neuronal cells, centrioles, axonemes, and the mitotic spindle. Both modifications can coexist on the same protein on adjacent residues, and lowering polyglycylation levels increases polyglutamylation, and reciprocally. The precise function of polyglycylation is still unclear. Some glutamate residues at the C-terminus are polyglutamylated, resulting in polyglutamate chains on the gamma-carboxyl group. Polyglutamylation plays a key role in microtubule severing by spastin (SPAST). SPAST preferentially recognizes and acts on microtubules decorated with short polyglutamate tails: severing activity by SPAST increases as the number of glutamates per tubulin rises from one to eight, but decreases beyond this glutamylation threshold. In terms of processing, acetylation of alpha chains at Lys-40 is located inside the microtubule lumen. This modification has been correlated with increased microtubule stability, intracellular transport and ciliary assembly. Post-translationally, undergoes a tyrosination/detyrosination cycle, the cyclic removal and re-addition of a C-terminal tyrosine residue by the enzymes tubulin tyrosine carboxypeptidase (MATCAP, VASH1 or VASH2) and tubulin tyrosine ligase (TTL), respectively. Tyrosination promotes microtubule interaction with CAP-Gly microtubule plus-end tracking proteins. Tyrosinated tubulins regulate the initiation of dynein-driven motility. In terms of processing, detyrosination is involved in metaphase plate congression by guiding chromosomes during mitosis. Detyrosination increases microtubules-dependent mechanotransduction in dystrophic cardiac and skeletal muscle. In cardiomyocytes, detyrosinated microtubules are required to resist to contractile compression during contraction.

It localises to the cytoplasm. It is found in the cytoskeleton. The catalysed reaction is GTP + H2O = GDP + phosphate + H(+). Functionally, tubulin is the major constituent of microtubules, a cylinder consisting of laterally associated linear protofilaments composed of alpha- and beta-tubulin heterodimers. Microtubules grow by the addition of GTP-tubulin dimers to the microtubule end, where a stabilizing cap forms. Below the cap, tubulin dimers are in GDP-bound state, owing to GTPase activity of alpha-tubulin. The protein is Tubulin alpha chain of Notophthalmus viridescens (Eastern newt).